Reading from the N-terminus, the 555-residue chain is Glutamate--tRNA ligase (555 aa).

The 'HIGH' region motif lies at 100–110 (PNPSGPLHIGH).

The protein belongs to the class-I aminoacyl-tRNA synthetase family. Glutamate--tRNA ligase type 2 subfamily.

The protein localises to the cytoplasm. It carries out the reaction tRNA(Glu) + L-glutamate + ATP = L-glutamyl-tRNA(Glu) + AMP + diphosphate. Catalyzes the attachment of glutamate to tRNA(Glu) in a two-step reaction: glutamate is first activated by ATP to form Glu-AMP and then transferred to the acceptor end of tRNA(Glu). This chain is Glutamate--tRNA ligase, found in Methanococcus maripaludis (strain C5 / ATCC BAA-1333).